The primary structure comprises 351 residues: N-acetyl-gamma-glutamyl-phosphate reductase (351 aa).

Cys-154 is an active-site residue.

Belongs to the NAGSA dehydrogenase family. Type 1 subfamily.

It localises to the cytoplasm. It catalyses the reaction N-acetyl-L-glutamate 5-semialdehyde + phosphate + NADP(+) = N-acetyl-L-glutamyl 5-phosphate + NADPH + H(+). The protein operates within amino-acid biosynthesis; L-arginine biosynthesis; N(2)-acetyl-L-ornithine from L-glutamate: step 3/4. Functionally, catalyzes the NADPH-dependent reduction of N-acetyl-5-glutamyl phosphate to yield N-acetyl-L-glutamate 5-semialdehyde. This chain is N-acetyl-gamma-glutamyl-phosphate reductase, found in Prochlorococcus marinus (strain MIT 9215).